Reading from the N-terminus, the 249-residue chain is Uridylate kinase (249 aa).

K19–G22 serves as a coordination point for ATP. Residue G61 coordinates UMP. ATP contacts are provided by G62 and R66. UMP is bound by residues D81 and T142–T149. ATP is bound by residues T169, Y175, and D178.

Belongs to the UMP kinase family. Homohexamer.

The protein localises to the cytoplasm. The enzyme catalyses UMP + ATP = UDP + ADP. It participates in pyrimidine metabolism; CTP biosynthesis via de novo pathway; UDP from UMP (UMPK route): step 1/1. With respect to regulation, inhibited by UTP. Its function is as follows. Catalyzes the reversible phosphorylation of UMP to UDP. This is Uridylate kinase from Anaeromyxobacter sp. (strain Fw109-5).